A 451-amino-acid chain; its full sequence is Protoheme IX farnesyltransferase, mitochondrial (451 aa).

6 consecutive transmembrane segments (helical) span residues 149-169 (TILV…PATV), 240-260 (PTVA…YTSL), 265-285 (IINT…GWAA), 289-309 (LTHP…FPHF), 339-359 (VALR…YFNI), and 414-434 (KAFF…ILHK).

This sequence belongs to the UbiA prenyltransferase family.

The protein resides in the mitochondrion membrane. Its function is as follows. Converts protoheme IX and farnesyl diphosphate to heme O. This Candida glabrata (strain ATCC 2001 / BCRC 20586 / JCM 3761 / NBRC 0622 / NRRL Y-65 / CBS 138) (Yeast) protein is Protoheme IX farnesyltransferase, mitochondrial (COX10).